The chain runs to 386 residues: MSDNFYDVLGVSRDASEEEIKKAYRKQAAEHHPDVSDDDDAEERFKAIQKAKEVLTDEQKRQQYDQLGHDRFTEADKRGATGGGGPGGAGGPFGGAGGAGGAGGFEDIFNQFFGGGGGRGGGGGNRPRQGQDLRTGLTIDLEEAFEGATKEVTLTRPTQCDTCDGAGHPPDADVETCSQCNGRGQVQQVQQTPLGRVQQTSTCPRCEGSGELYSEDCADCGGDGVVREEATLSVEIPAGIRSGQSLRMEREGAPGENGGPNGDLLIEVDVDVGDRFERDGDDLRVNEAVSFPQAVFGDTIEVETVDGSVEMDVPTGTQSGETFRLKGKGMPRLRRRGRGDLYVKVGVVIPDSLNEEQREALEAFAEAGGEDVDVGGGFFKKLKSSF.

The 65-residue stretch at 4-68 (NFYDVLGVSR…QKRQQYDQLG (65 aa)) folds into the J domain. Basic and acidic residues-rich tracts occupy residues 22–35 (KAYR…HPDV) and 43–79 (ERFK…DKRG). A disordered region spans residues 22 to 132 (KAYRKQAAEH…GGNRPRQGQD (111 aa)). 2 stretches are compositionally biased toward gly residues: residues 80–104 (ATGG…GAGG) and 113–125 (FGGG…GGGN). The segment at 147–229 (GATKEVTLTR…CGGDGVVREE (83 aa)) adopts a CR-type zinc-finger fold. Positions 160, 163, 177, 180, 203, 206, 217, and 220 each coordinate Zn(2+). CXXCXGXG motif repeat units lie at residues 160-167 (CDTCDGAG), 177-184 (CSQCNGRG), 203-210 (CPRCEGSG), and 217-224 (CADCGGDG).

The protein belongs to the DnaJ family. As to quaternary structure, homodimer. Zn(2+) serves as cofactor.

Its subcellular location is the cytoplasm. Participates actively in the response to hyperosmotic and heat shock by preventing the aggregation of stress-denatured proteins and by disaggregating proteins, also in an autonomous, DnaK-independent fashion. Unfolded proteins bind initially to DnaJ; upon interaction with the DnaJ-bound protein, DnaK hydrolyzes its bound ATP, resulting in the formation of a stable complex. GrpE releases ADP from DnaK; ATP binding to DnaK triggers the release of the substrate protein, thus completing the reaction cycle. Several rounds of ATP-dependent interactions between DnaJ, DnaK and GrpE are required for fully efficient folding. Also involved, together with DnaK and GrpE, in the DNA replication of plasmids through activation of initiation proteins. The chain is Chaperone protein DnaJ from Halorubrum lacusprofundi (strain ATCC 49239 / DSM 5036 / JCM 8891 / ACAM 34).